The following is a 108-amino-acid chain: UPF0060 membrane protein YnfA (108 aa).

The Periplasmic portion of the chain corresponds to 1–5 (MFKTT). The helical transmembrane segment at 6 to 26 (LLFFITALCEIIGCFLPWLWL) threads the bilayer. Over 27-30 (KRNG) the chain is Cytoplasmic. A helical membrane pass occupies residues 31–51 (SIWLLLPAGVSLAFFVWLLTL). The Periplasmic portion of the chain corresponds to 52 to 60 (HPAASGRVY). Residues 61–81 (AAYGGVYVCTALLWLRFIDGV) traverse the membrane as a helical segment. Residues 82–84 (KLS) lie on the Cytoplasmic side of the membrane. Residues 85–105 (LYDWSGALIALCGMLIIVAGW) form a helical membrane-spanning segment. Over 106 to 108 (GRA) the chain is Periplasmic.

Belongs to the UPF0060 family.

It localises to the cell inner membrane. This chain is UPF0060 membrane protein YnfA, found in Escherichia fergusonii (strain ATCC 35469 / DSM 13698 / CCUG 18766 / IAM 14443 / JCM 21226 / LMG 7866 / NBRC 102419 / NCTC 12128 / CDC 0568-73).